Here is a 366-residue protein sequence, read N- to C-terminus: S-adenosylmethionine:tRNA ribosyltransferase-isomerase (366 aa).

This sequence belongs to the QueA family. As to quaternary structure, monomer.

The protein localises to the cytoplasm. It catalyses the reaction 7-aminomethyl-7-carbaguanosine(34) in tRNA + S-adenosyl-L-methionine = epoxyqueuosine(34) in tRNA + adenine + L-methionine + 2 H(+). It participates in tRNA modification; tRNA-queuosine biosynthesis. In terms of biological role, transfers and isomerizes the ribose moiety from AdoMet to the 7-aminomethyl group of 7-deazaguanine (preQ1-tRNA) to give epoxyqueuosine (oQ-tRNA). This chain is S-adenosylmethionine:tRNA ribosyltransferase-isomerase, found in Methylorubrum populi (strain ATCC BAA-705 / NCIMB 13946 / BJ001) (Methylobacterium populi).